Here is a 208-residue protein sequence, read N- to C-terminus: MVYFYESKPTEYSTPYQIVMGKDKFENDLLIKWSYRELNYVWFHADKYSSGHVYLKLRPNEKTIDDIPQEVICDCLQLCKSESIQGNKMPQCTILITPWHNLRKNRYMNPGEVSFKSLRQCRKMECGARDNKILNRLAKTRVELFNNVEATLNEAKKTKNGDFFVNYIESNRSNLIEEEKLRKVAKKNQKKKNKQSKDEVTDDMQLEV.

Over residues 185–194 the composition is skewed to basic residues; sequence AKKNQKKKNK. The disordered stretch occupies residues 185–208; it reads AKKNQKKKNKQSKDEVTDDMQLEV.

This sequence belongs to the CCDC25 family.

The protein resides in the cytoplasm. The polypeptide is Protein JLP2 (JLP2) (Saccharomyces cerevisiae (strain ATCC 204508 / S288c) (Baker's yeast)).